The primary structure comprises 28 residues: Phospholipase A2 (28 aa).

Glycine 28 is a binding site for Ca(2+).

Requires Ca(2+) as cofactor. Expressed by the venom gland.

Its subcellular location is the secreted. It catalyses the reaction a 1,2-diacyl-sn-glycero-3-phosphocholine + H2O = a 1-acyl-sn-glycero-3-phosphocholine + a fatty acid + H(+). In terms of biological role, PLA2 catalyzes the calcium-dependent hydrolysis of the 2-acyl groups in 3-sn-phosphoglycerides. The chain is Phospholipase A2 from Scolopendra dehaani (Thai centipede).